A 348-amino-acid chain; its full sequence is Tocopherol O-methyltransferase, chloroplastic (348 aa).

The N-terminal 51 residues, 1-51 (MKATLAAPSSLTSLPYRTNSSFGSKSSLLFRSPSSSSSVSMTTTRGNVAVA), are a transit peptide targeting the chloroplast. An N-acetylalanine modification is found at Ala52. Residues 130 to 139 (VVDVGCGIGG) are SAM motif I. The segment at 193–201 (GKFDLVWSM) is SAM motif II. The segment at 220–229 (VAAPGGRIII) is SAM motif III.

This sequence belongs to the class I-like SAM-binding methyltransferase superfamily. gTMT family.

It is found in the plastid. The protein resides in the chloroplast. The catalysed reaction is gamma-tocopherol + S-adenosyl-L-methionine = (+)-alpha-tocopherol + S-adenosyl-L-homocysteine + H(+). The enzyme catalyses delta-tocotrienol + S-adenosyl-L-methionine = beta-tocotrienol + S-adenosyl-L-homocysteine + H(+). It catalyses the reaction gamma-tocotrienol + S-adenosyl-L-methionine = alpha-tocotrienol + S-adenosyl-L-homocysteine + H(+). It carries out the reaction delta-tocopherol + S-adenosyl-L-methionine = beta-tocopherol + S-adenosyl-L-homocysteine + H(+). The protein operates within cofactor biosynthesis; tocopherol biosynthesis. Involved in the synthesis of tocopherol (vitamin E). Methylates gamma- and delta-tocopherol to form beta- and alpha-tocopherol, respectively. This is Tocopherol O-methyltransferase, chloroplastic (VTE4) from Arabidopsis thaliana (Mouse-ear cress).